Here is a 426-residue protein sequence, read N- to C-terminus: MRVLFYVSILVIIASVHTQLISVHVIFRHGARAPVLNVTSEEAKSYFYRGLGQLTDEGFEQARLMGKVLRDRYVNSFVDARMLSSQLLFRSSPVERCLMTLQTVGNTMFPNATPPVQTVAKPDDFLLVPKLDCDFQLGEWDNYFNLTESDKKMARKNPWFVSDKALRKAVTKTDFLQDRGGENLPALILEKEAGLAVPSWFNEGAYKESLHVFYSALAVMSSVGEYKSSKGIRIKSGLLMEKVFNDIQEKVRCHEKKEVSNIKCDIHKLQVFSSHDLLILPILETLGIREEVLGKDMPPEFMSTIIIETMIVDNSPVVKVLFRKNPREITLRDVTGFVKNCPPGQPLCPVQRFTSCCNEFITSDPKSECYAETTVEKQSEWVMTPLSWIIVAIAILLLIALILMTYFVIRYKNRSIVNIKKLSLEN.

The first 18 residues, 1–18 (MRVLFYVSILVIIASVHT), serve as a signal peptide directing secretion. Topologically, residues 19–388 (QLISVHVIFR…SEWVMTPLSW (370 aa)) are extracellular. The active-site Nucleophile is the histidine 29. 2 N-linked (GlcNAc...) asparagine glycosylation sites follow: asparagine 37 and asparagine 145. A disulfide bridge connects residues cysteine 133 and cysteine 369. Residue aspartate 276 is the Proton donor of the active site. The chain crosses the membrane as a helical span at residues 389–409 (IIVAIAILLLIALILMTYFVI). Residues 410-426 (RYKNRSIVNIKKLSLEN) lie on the Cytoplasmic side of the membrane.

Belongs to the histidine acid phosphatase family.

The protein resides in the membrane. It carries out the reaction a phosphate monoester + H2O = an alcohol + phosphate. In Caenorhabditis elegans, this protein is Putative acid phosphatase 1.